Reading from the N-terminus, the 90-residue chain is Bombyxin B-6 (90 aa).

The signal sequence occupies residues 1-20; that stretch reads MMKTSVMFMLVVVISLMCSS. Cystine bridges form between Cys-30/Cys-76, Cys-42/Cys-89, and Cys-75/Cys-80. Residues 49–67 constitute a propeptide, c peptide like; the sequence is GVAQYAPYFWTRQYLGSRG.

This sequence belongs to the insulin family. As to quaternary structure, heterodimer of a B chain and an A chain linked by two disulfide bonds.

The protein resides in the secreted. Its function is as follows. Brain peptide responsible for activation of prothoracic glands to produce ecdysone in insects. The polypeptide is Bombyxin B-6 (BBXB6) (Bombyx mori (Silk moth)).